A 594-amino-acid polypeptide reads, in one-letter code: Type I restriction enzyme EcoEI specificity subunit (594 aa).

This sequence belongs to the type-I restriction system S methylase family. The type I restriction/modification system is composed of three polypeptides R, M and S; the restriction enzyme has stoichiometry R(2)M(2)S(1) while the methyltransferase is M(2)S(1).

Functionally, the specificity (S) subunit of a type I restriction enzyme; this subunit dictates DNA sequence specificity. The M and S subunits together form a methyltransferase (MTase) that methylates two adenine residues of the sequence 5'-GAGN(7)ATGC-3'. In the presence of the R subunit the complex can also act as an endonuclease, binding to the same target sequence but cutting the DNA some distance from this site. Whether the DNA is cut or modified depends on the methylation state of the target sequence. When the target site is unmodified, the DNA is cut. When the target site is hemimethylated, the complex acts as a maintenance MTase modifying the DNA so that both strands become methylated. After locating a non-methylated recognition site, the enzyme complex serves as a molecular motor that translocates DNA in an ATP-dependent manner until a collision occurs that triggers cleavage. This chain is Type I restriction enzyme EcoEI specificity subunit, found in Escherichia coli.